The primary structure comprises 418 residues: Imidazolonepropionase (418 aa).

His79 and His81 together coordinate Fe(3+). Zn(2+) contacts are provided by His79 and His81. Residues Arg88, Tyr151, and His184 each contribute to the 4-imidazolone-5-propanoate site. An N-formimidoyl-L-glutamate-binding site is contributed by Tyr151. Residue His249 participates in Fe(3+) binding. A Zn(2+)-binding site is contributed by His249. Gln252 provides a ligand contact to 4-imidazolone-5-propanoate. Asp324 serves as a coordination point for Fe(3+). A Zn(2+)-binding site is contributed by Asp324. Asn326 and Gly328 together coordinate N-formimidoyl-L-glutamate. Residue Thr329 participates in 4-imidazolone-5-propanoate binding.

It belongs to the metallo-dependent hydrolases superfamily. HutI family. The cofactor is Zn(2+). Fe(3+) is required as a cofactor.

Its subcellular location is the cytoplasm. It catalyses the reaction 4-imidazolone-5-propanoate + H2O = N-formimidoyl-L-glutamate. The protein operates within amino-acid degradation; L-histidine degradation into L-glutamate; N-formimidoyl-L-glutamate from L-histidine: step 3/3. Catalyzes the hydrolytic cleavage of the carbon-nitrogen bond in imidazolone-5-propanoate to yield N-formimidoyl-L-glutamate. It is the third step in the universal histidine degradation pathway. The chain is Imidazolonepropionase from Colwellia psychrerythraea (strain 34H / ATCC BAA-681) (Vibrio psychroerythus).